We begin with the raw amino-acid sequence, 33 residues long: Alpha-amanitin proprotein (33 aa).

Positions M1–P10 are excised as a propeptide. I11 is modified ((3R,4R)-4,5-dihydroxyisoleucine; in form alpha-amanitin). I11 carries the post-translational modification (3R,4S)-4-hydroxyisoleucine; in form gamma-amanitin. The cyclopeptide (Ile-Pro) cross-link spans I11–P18. The segment at residues W12–C16 is a cross-link (2'-cysteinyl-6'-hydroxytryptophan sulfoxide (Trp-Cys)). A 4-hydroxyproline modification is found at P18. Residues S19–A33 constitute a propeptide that is removed on maturation.

This sequence belongs to the MSDIN fungal toxin family. Post-translationally, processed by the macrocyclase-peptidase enzyme POPB to yield a toxic cyclic decapeptide. POPB first removes 10 residues from the N-terminus. Conformational trapping of the remaining peptide forces the enzyme to release this intermediate rather than proceed to macrocyclization. The enzyme rebinds the remaining peptide in a different conformation and catalyzes macrocyclization of the N-terminal 8 residues.

Functionally, major toxin belonging to the bicyclic octapeptides amatoxins that acts by binding non-competitively to RNA polymerase II and greatly slowing the elongation of transcripts from target promoters. The sequence is that of Alpha-amanitin proprotein from Amanita rimosa.